We begin with the raw amino-acid sequence, 301 residues long: Zinc finger protein LEE1 (301 aa).

Residues 1-25 (MDAFENMSVSNHPGGNARRNSQSAN) form a disordered region. Residues 7 to 25 (MSVSNHPGGNARRNSQSAN) are compositionally biased toward polar residues. Residues serine 21 and serine 30 each carry the phosphoserine modification. 2 consecutive C3H1-type zinc fingers follow at residues 87–114 (DYSH…HSPD) and 123–145 (PCKY…HVLP). Residue serine 282 is modified to Phosphoserine.

This chain is Zinc finger protein LEE1 (LEE1), found in Saccharomyces cerevisiae (strain ATCC 204508 / S288c) (Baker's yeast).